The sequence spans 513 residues: GMP synthase [glutamine-hydrolyzing] (513 aa).

The Glutamine amidotransferase type-1 domain occupies 8–198 (MILVLDFGSQ…VFGVCDCDGK (191 aa)). The Nucleophile role is filled by Cys-85. Catalysis depends on residues His-172 and Glu-174. The GMPS ATP-PPase domain maps to 199–388 (WSMENFIEIE…LGIPDDIVWR (190 aa)). 226–232 (SGGVDSS) serves as a coordination point for ATP.

As to quaternary structure, homodimer.

It catalyses the reaction XMP + L-glutamine + ATP + H2O = GMP + L-glutamate + AMP + diphosphate + 2 H(+). The protein operates within purine metabolism; GMP biosynthesis; GMP from XMP (L-Gln route): step 1/1. Catalyzes the synthesis of GMP from XMP. This chain is GMP synthase [glutamine-hydrolyzing], found in Bacillus pumilus (strain SAFR-032).